We begin with the raw amino-acid sequence, 565 residues long: Anaphase-promoting complex subunit 7 (565 aa).

TPR repeat units follow at residues 101–134 (EIEV…RQRT), 169–202 (LDAI…LDWL), 203–236 (SVWI…LRDN), 237–270 (VDLL…DPYL), 339–372 (VQAL…APCR), 373–406 (LDCY…LGAN), 407–441 (AQTL…RPDY), 442–474 (IKAV…NQSD), 475–508 (CVLH…DPND), and 509–531 (QKSL…TQEE). At lysine 229 the chain carries N6-acetyllysine. Residues 513 to 523 (EGMQKMEKEES) are compositionally biased toward basic and acidic residues. Positions 513–565 (EGMQKMEKEESPTDATQEEDVDDMEGSGEEGDLEGSDSEAAQWADQEQWFGMQ) are disordered. Residues 528–549 (TQEEDVDDMEGSGEEGDLEGSD) show a composition bias toward acidic residues.

This sequence belongs to the APC7 family. In terms of assembly, V-shaped homodimer. The mammalian APC/C is composed at least of 14 distinct subunits ANAPC1, ANAPC2, CDC27/APC3, ANAPC4, ANAPC5, CDC16/APC6, ANAPC7, CDC23/APC8, ANAPC10, ANAPC11, CDC26/APC12, ANAPC13, ANAPC15 and ANAPC16 that assemble into a complex of at least 19 chains with a combined molecular mass of around 1.2 MDa; APC/C interacts with FZR1 and FBXO5.

The protein localises to the cytoplasm. Its subcellular location is the cytoskeleton. It is found in the nucleus. It localises to the spindle. It functions in the pathway protein modification; protein ubiquitination. Its function is as follows. Component of the anaphase promoting complex/cyclosome (APC/C), a cell cycle-regulated E3 ubiquitin ligase that controls progression through mitosis and the G1 phase of the cell cycle. The APC/C complex acts by mediating ubiquitination and subsequent degradation of target proteins: it mainly mediates the formation of 'Lys-11'-linked polyubiquitin chains and, to a lower extent, the formation of 'Lys-48'- and 'Lys-63'-linked polyubiquitin chains. The APC/C complex catalyzes assembly of branched 'Lys-11'-/'Lys-48'-linked branched ubiquitin chains on target proteins. APC7 is not required for the assembly of the APC/C complex, but has an enzyme-substrate adapter activity mediating the processive ubiquitination of specific substrates. Involved in brain development through the specific ubiquitination and clearance of MKI67 from constitutive heterochromatin after neuronal progenitors exit mitosis. This Homo sapiens (Human) protein is Anaphase-promoting complex subunit 7.